Here is a 555-residue protein sequence, read N- to C-terminus: MTRLDNSRVIRPATGTELSAKSWLTEAPLRMLMNNLHPDVAERPEELVVYGGIGRAARDWESYDRIVETLKRLEADQTLLVQSGKPVGVFRTHEDAPRVLIANSNLVPKWATWEHFNELDRKGLAMYGQMTAGSWIYIGTQGIVQGTYETFVEMGRQHYDDDLSGRWLLTAGLGGMGGAQPLAAVMAGASCLAIECQPSRIDMRLRTGYLDRAAETIDEAMAIIEESCAARKPLSVGLLGNAAEILPEMYRRGIRPDLLTDQTSAHDPVNGYLPAGWTVAEWIERREREPEAVAKAAKASMAVHVRAMLDFQAAGVPTVDYGNNIRQVAKDEGVANAFDFPGFVPAYIRPLFCRGIGPFRWAALSGDPEDIFKTDAKVKELLPDNHHLHRWLDMARDRIHFQGLPARICWVGLGDRHRLGLAFNEMVAKGELKAPVVIGRDHLDSGSVASPNRETEAMRDGSDAVSDWPLLNALLNTASGATWVSLHHGGGVGMGYSQHSGMVIVADGTEAAAKRLERVLWNDPATGVMRHADAGYDIALDCARDKGLDLPGILG.

Residues 51–52 (GG), Q129, 175–177 (GMG), E195, R200, 241–242 (NA), 262–266 (QTSAH), 272–273 (YL), and Y321 each bind NAD(+). C409 is a catalytic residue. Residue G491 participates in NAD(+) binding.

The protein belongs to the urocanase family. The cofactor is NAD(+).

Its subcellular location is the cytoplasm. It carries out the reaction 4-imidazolone-5-propanoate = trans-urocanate + H2O. It participates in amino-acid degradation; L-histidine degradation into L-glutamate; N-formimidoyl-L-glutamate from L-histidine: step 2/3. In terms of biological role, catalyzes the conversion of urocanate to 4-imidazolone-5-propionate. This is Urocanate hydratase from Rhizorhabdus wittichii (strain DSM 6014 / CCUG 31198 / JCM 15750 / NBRC 105917 / EY 4224 / RW1) (Sphingomonas wittichii).